Here is a 138-residue protein sequence, read N- to C-terminus: Cysteine desulfuration protein SufE (138 aa).

The active-site Cysteine persulfide intermediate is C51.

It belongs to the SufE family. Homodimer. Interacts with SufS.

Its subcellular location is the cytoplasm. It functions in the pathway cofactor biosynthesis; iron-sulfur cluster biosynthesis. Functionally, participates in cysteine desulfuration mediated by SufS. Cysteine desulfuration mobilizes sulfur from L-cysteine to yield L-alanine and constitutes an essential step in sulfur metabolism for biosynthesis of a variety of sulfur-containing biomolecules. Functions as a sulfur acceptor for SufS, by mediating the direct transfer of the sulfur atom from the S-sulfanylcysteine of SufS, an intermediate product of cysteine desulfuration process. This is Cysteine desulfuration protein SufE from Salmonella agona (strain SL483).